We begin with the raw amino-acid sequence, 240 residues long: Phosphoribosylaminoimidazole-succinocarboxamide synthase (240 aa).

This sequence belongs to the SAICAR synthetase family.

The catalysed reaction is 5-amino-1-(5-phospho-D-ribosyl)imidazole-4-carboxylate + L-aspartate + ATP = (2S)-2-[5-amino-1-(5-phospho-beta-D-ribosyl)imidazole-4-carboxamido]succinate + ADP + phosphate + 2 H(+). Its pathway is purine metabolism; IMP biosynthesis via de novo pathway; 5-amino-1-(5-phospho-D-ribosyl)imidazole-4-carboxamide from 5-amino-1-(5-phospho-D-ribosyl)imidazole-4-carboxylate: step 1/2. The protein is Phosphoribosylaminoimidazole-succinocarboxamide synthase of Pyrobaculum calidifontis (strain DSM 21063 / JCM 11548 / VA1).